The following is a 122-amino-acid chain: Phosphoribosyl-ATP pyrophosphatase (122 aa).

This sequence belongs to the PRA-PH family.

It is found in the cytoplasm. It carries out the reaction 1-(5-phospho-beta-D-ribosyl)-ATP + H2O = 1-(5-phospho-beta-D-ribosyl)-5'-AMP + diphosphate + H(+). It participates in amino-acid biosynthesis; L-histidine biosynthesis; L-histidine from 5-phospho-alpha-D-ribose 1-diphosphate: step 2/9. This chain is Phosphoribosyl-ATP pyrophosphatase, found in Burkholderia thailandensis (strain ATCC 700388 / DSM 13276 / CCUG 48851 / CIP 106301 / E264).